A 101-amino-acid chain; its full sequence is uncharacterized protein (101 aa).

The N-terminal stretch at 1-21 (MKLSTCCAALLLALASPAVLA) is a signal peptide. Polar residues predominate over residues 79 to 94 (RTTSGNVSAPAQSSQD). The tract at residues 79 to 101 (RTTSGNVSAPAQSSQDGAPAEPQ) is disordered.

This is an uncharacterized protein from Escherichia coli (strain K12).